A 223-amino-acid chain; its full sequence is MSNMNQTIMDAFHFRHATKQFDPQKKVSKEDFETILESGRLSPSSLGLEPWKFVVIQDQALRDELKAHSWGAAKQLDTASHFVLIFARKNVTSRSPYVQHMLRDIKKYEAQTIPAVEQKFDAFQADFHISDNDQALYDWSSKQTYIALGNMMTTAALLGIDSCPMEGFSLDTVTDILANKGILDTEQFGLSVMVAFGYRQQDPPKNKTRQAYEDVIEWVGPKE.

Belongs to the nitroreductase family. It depends on FMN as a cofactor.

This chain is Putative NAD(P)H nitroreductase SAB2397c, found in Staphylococcus aureus (strain bovine RF122 / ET3-1).